Here is a 122-residue protein sequence, read N- to C-terminus: Cofilin/actin-depolymerizing factor homolog 1 (122 aa).

One can recognise an ADF-H domain in the interval 4-122 (GIRVNDNCVT…ESAQDVADLK (119 aa)).

It belongs to the actin-binding proteins ADF family. In terms of assembly, interacts with monomeric actin, does not bind to actin polymers.

It is found in the cytoplasm. The protein localises to the cytoskeleton. Not involved in actin polymerisation, instead functions to stimulate nucleotide exchange on monomeric actin and influence turnover of the small amount of cytosolic actin microfilaments. Essential for erythrocytic schizogony. The sequence is that of Cofilin/actin-depolymerizing factor homolog 1 from Plasmodium falciparum (isolate 3D7).